A 637-amino-acid chain; its full sequence is Sphingomyelin phosphodiesterase B (637 aa).

An N-terminal signal peptide occupies residues 1–20 (MKVKAPILLLFVFLINFCFS). The N-linked (GlcNAc...) asparagine glycan is linked to Asn73. The region spanning 73–155 (NGTKCDICKF…GFVGFCPYVP (83 aa)) is the Saposin B-type domain. Intrachain disulfides connect Cys77–Cys151, Cys80–Cys145, and Cys108–Cys119. Residues Asn128 and Asn157 are each glycosylated (N-linked (GlcNAc...) asparagine). Residues Asp191 and His193 each coordinate Zn(2+). Cysteines 212 and 233 form a disulfide. A Zn(2+)-binding site is contributed by Asp263. The N-linked (GlcNAc...) asparagine glycan is linked to Asn279. Asn304 contacts Zn(2+). N-linked (GlcNAc...) asparagine glycosylation occurs at Asn377. Residues His407, His441, and His443 each coordinate Zn(2+). N-linked (GlcNAc...) asparagine glycosylation is found at Asn523 and Asn546. Cys582 and Cys595 form a disulfide bridge. Asn606 carries N-linked (GlcNAc...) asparagine glycosylation.

It belongs to the acid sphingomyelinase family. Zn(2+) is required as a cofactor.

The protein resides in the secreted. In terms of biological role, converts sphingomyelin to ceramide. This Dictyostelium discoideum (Social amoeba) protein is Sphingomyelin phosphodiesterase B (sgmB).